We begin with the raw amino-acid sequence, 440 residues long: Chromosomal replication initiator protein DnaA (440 aa).

The segment at 1-75 (MNPNQILENL…QSGNKASVLI (75 aa)) is domain I, interacts with DnaA modulators. The tract at residues 75–99 (IQAQSAKQSSKSTKIDIAHIKAQST) is domain II. A domain III, AAA+ region region spans residues 100 to 316 (ILNPSFTFES…GIIISLNAYA (217 aa)). Gly-146, Gly-148, Lys-149, and Thr-150 together coordinate ATP. The interval 317–440 (TILGQEITLE…KNKILVKSQS (124 aa)) is domain IV, binds dsDNA.

This sequence belongs to the DnaA family. Oligomerizes as a right-handed, spiral filament on DNA at oriC.

It is found in the cytoplasm. In terms of biological role, plays an essential role in the initiation and regulation of chromosomal replication. ATP-DnaA binds to the origin of replication (oriC) to initiate formation of the DNA replication initiation complex once per cell cycle. Binds the DnaA box (a 9 base pair repeat at the origin) and separates the double-stranded (ds)DNA. Forms a right-handed helical filament on oriC DNA; dsDNA binds to the exterior of the filament while single-stranded (ss)DNA is stabiized in the filament's interior. The ATP-DnaA-oriC complex binds and stabilizes one strand of the AT-rich DNA unwinding element (DUE), permitting loading of DNA polymerase. After initiation quickly degrades to an ADP-DnaA complex that is not apt for DNA replication. Binds acidic phospholipids. The protein is Chromosomal replication initiator protein DnaA of Campylobacter jejuni subsp. jejuni serotype O:6 (strain 81116 / NCTC 11828).